A 148-amino-acid chain; its full sequence is Transcriptional regulator MraZ (148 aa).

SpoVT-AbrB domains follow at residues 5–51 and 80–123; these read VSIL…PEPN and AETL…NAEE.

This sequence belongs to the MraZ family. As to quaternary structure, forms oligomers.

Its subcellular location is the cytoplasm. It is found in the nucleoid. The polypeptide is Transcriptional regulator MraZ (Chromobacterium violaceum (strain ATCC 12472 / DSM 30191 / JCM 1249 / CCUG 213 / NBRC 12614 / NCIMB 9131 / NCTC 9757 / MK)).